An 89-amino-acid chain; its full sequence is Small ribosomal subunit protein uS15 (89 aa).

It belongs to the universal ribosomal protein uS15 family. As to quaternary structure, part of the 30S ribosomal subunit. Forms a bridge to the 50S subunit in the 70S ribosome, contacting the 23S rRNA.

In terms of biological role, one of the primary rRNA binding proteins, it binds directly to 16S rRNA where it helps nucleate assembly of the platform of the 30S subunit by binding and bridging several RNA helices of the 16S rRNA. Forms an intersubunit bridge (bridge B4) with the 23S rRNA of the 50S subunit in the ribosome. The sequence is that of Small ribosomal subunit protein uS15 from Staphylococcus aureus (strain JH1).